A 213-amino-acid polypeptide reads, in one-letter code: Probable thymidylate kinase 2 (213 aa).

10–17 (GIDGSGKS) lines the ATP pocket.

It belongs to the thymidylate kinase family.

The enzyme catalyses dTMP + ATP = dTDP + ADP. The sequence is that of Probable thymidylate kinase 2 (tmk2) from Saccharolobus solfataricus (strain ATCC 35092 / DSM 1617 / JCM 11322 / P2) (Sulfolobus solfataricus).